Here is a 457-residue protein sequence, read N- to C-terminus: Succinate-semialdehyde dehydrogenase [NADP(+)] (457 aa).

NADP(+)-binding positions include 133-134 (WN), 157-160 (KHAS), and 209-210 (GS). The active-site Proton acceptor is E231. L232 contributes to the NADP(+) binding site. C265 functions as the Nucleophile in the catalytic mechanism. E362 is an NADP(+) binding site.

Belongs to the aldehyde dehydrogenase family.

The enzyme catalyses succinate semialdehyde + NADP(+) + H2O = succinate + NADPH + 2 H(+). Its function is as follows. Catalyzes the NADP(+)-dependent oxidation of succinate semialdehyde to succinate. It is believed to be the main source of succinate semialdehyde dehydrogenase activity in Mycobacterium. In Mycobacterium leprae (strain TN), this protein is Succinate-semialdehyde dehydrogenase [NADP(+)] (gabD1).